Reading from the N-terminus, the 390-residue chain is S-adenosylmethionine synthase 1 (390 aa).

Mg(2+) is bound at residue Glu-9. His-15 serves as a coordination point for ATP. Glu-43 lines the K(+) pocket. Residues Glu-56 and Gln-99 each coordinate L-methionine. Residues 167-169, 235-238, Asp-246, 252-253, Ala-269, Lys-273, and Lys-277 each bind ATP; these read DGK, SGRF, and RK. Asp-246 is a binding site for L-methionine. Lys-277 lines the L-methionine pocket.

It belongs to the AdoMet synthase family. As to quaternary structure, homotetramer. Requires Mn(2+) as cofactor. It depends on Mg(2+) as a cofactor. The cofactor is Co(2+). K(+) is required as a cofactor.

The protein resides in the cytoplasm. It carries out the reaction L-methionine + ATP + H2O = S-adenosyl-L-methionine + phosphate + diphosphate. It functions in the pathway amino-acid biosynthesis; S-adenosyl-L-methionine biosynthesis; S-adenosyl-L-methionine from L-methionine: step 1/1. Its function is as follows. Catalyzes the formation of S-adenosylmethionine from methionine and ATP. The reaction comprises two steps that are both catalyzed by the same enzyme: formation of S-adenosylmethionine (AdoMet) and triphosphate, and subsequent hydrolysis of the triphosphate. In Nicotiana tabacum (Common tobacco), this protein is S-adenosylmethionine synthase 1 (SAMS1).